Consider the following 297-residue polypeptide: Small ribosomal subunit protein uS2 (297 aa).

The segment at 266–297 (GASWDAAEPSDWAATPAAAGQEWAASGATEQW) is disordered. The segment covering 282-297 (AAAGQEWAASGATEQW) has biased composition (low complexity).

It belongs to the universal ribosomal protein uS2 family. Component of the small ribosomal subunit. Mature ribosomes consist of a small (40S) and a large (60S) subunit. The 40S subunit contains about 33 different proteins and 1 molecule of RNA (18S). The 60S subunit contains about 49 different proteins and 3 molecules of RNA (25S, 5.8S and 5S). Interacts with rps21.

The protein localises to the cytoplasm. In terms of biological role, required for the assembly and/or stability of the 40S ribosomal subunit. Required for the processing of the 20S rRNA-precursor to mature 18S rRNA in a late step of the maturation of 40S ribosomal subunits. The protein is Small ribosomal subunit protein uS2 (rps0) of Sclerotinia sclerotiorum (strain ATCC 18683 / 1980 / Ss-1) (White mold).